Reading from the N-terminus, the 293-residue chain is Small ribosomal subunit biogenesis GTPase RsgA (293 aa).

The 161-residue stretch at 63 to 223 folds into the CP-type G domain; the sequence is QNELVRPPIA…VADTPGFSAL (161 aa). Residues 112–115 and 166–174 each bind GTP; these read SKID and GQSGVGKSS. Residues Cys-247, Cys-252, His-254, and Cys-260 each coordinate Zn(2+).

The protein belongs to the TRAFAC class YlqF/YawG GTPase family. RsgA subfamily. As to quaternary structure, monomer. Associates with 30S ribosomal subunit, binds 16S rRNA. Zn(2+) serves as cofactor.

It is found in the cytoplasm. Functionally, one of several proteins that assist in the late maturation steps of the functional core of the 30S ribosomal subunit. Helps release RbfA from mature subunits. May play a role in the assembly of ribosomal proteins into the subunit. Circularly permuted GTPase that catalyzes slow GTP hydrolysis, GTPase activity is stimulated by the 30S ribosomal subunit. The chain is Small ribosomal subunit biogenesis GTPase RsgA from Geobacillus kaustophilus (strain HTA426).